Consider the following 334-residue polypeptide: Phosphoribosylformylglycinamidine cyclo-ligase (334 aa).

This sequence belongs to the AIR synthase family.

It localises to the cytoplasm. It carries out the reaction 2-formamido-N(1)-(5-O-phospho-beta-D-ribosyl)acetamidine + ATP = 5-amino-1-(5-phospho-beta-D-ribosyl)imidazole + ADP + phosphate + H(+). It participates in purine metabolism; IMP biosynthesis via de novo pathway; 5-amino-1-(5-phospho-D-ribosyl)imidazole from N(2)-formyl-N(1)-(5-phospho-D-ribosyl)glycinamide: step 2/2. This chain is Phosphoribosylformylglycinamidine cyclo-ligase, found in Pyrococcus abyssi (strain GE5 / Orsay).